Reading from the N-terminus, the 635-residue chain is GTPase-GDP dissociation stimulator vimar (635 aa).

ARM repeat units lie at residues K72 to Y118, T346 to I391, P392 to D432, and R510 to V550.

In terms of assembly, interacts with Miro.

The protein resides in the endoplasmic reticulum. It is found in the mitochondrion. The protein localises to the cytoplasm. It localises to the cytosol. Functionally, probably acts as a GEF (guanine nucleotide exchange factor) for the Rho family of small GTP-binding proteins (G proteins) that stimulates the dissociation of GDP to enable subsequent binding of GTP. May also chaperone the processing and/or trafficking of small GTPases independently of GEF activity. By interacting with Miro, promotes mitochondrial fission in response to high calcium concentrations. The chain is GTPase-GDP dissociation stimulator vimar from Drosophila melanogaster (Fruit fly).